A 298-amino-acid polypeptide reads, in one-letter code: UDP-N-acetylenolpyruvoylglucosamine reductase (298 aa).

Residues 27–206 (VGGPAQRLYR…QQQIRRLLRQ (180 aa)) enclose the FAD-binding PCMH-type domain. Arginine 171 is an active-site residue. Residue serine 220 is the Proton donor of the active site. The active site involves glutamate 290.

The protein belongs to the MurB family. Requires FAD as cofactor.

The protein resides in the cytoplasm. It catalyses the reaction UDP-N-acetyl-alpha-D-muramate + NADP(+) = UDP-N-acetyl-3-O-(1-carboxyvinyl)-alpha-D-glucosamine + NADPH + H(+). It participates in cell wall biogenesis; peptidoglycan biosynthesis. Functionally, cell wall formation. The chain is UDP-N-acetylenolpyruvoylglucosamine reductase from Nitrosococcus oceani (strain ATCC 19707 / BCRC 17464 / JCM 30415 / NCIMB 11848 / C-107).